The primary structure comprises 249 residues: FMN reductase (NADPH) (249 aa).

This sequence belongs to the flavin oxidoreductase frp family. As to quaternary structure, homodimer.

The catalysed reaction is FMNH2 + NADP(+) = FMN + NADPH + 2 H(+). Its function is as follows. Reduces FMNH(2) to FMN, with NADPH as reductant. It also reduces nitroaromatic compounds, quinones and azo dyes. The chain is FMN reductase (NADPH) (nfrA1) from Bacillus subtilis (strain 168).